Here is a 206-residue protein sequence, read N- to C-terminus: Small ribosomal subunit protein uS4 (206 aa).

The 66-residue stretch at 96 to 161 (RRLDNVVYRM…QGRIQAALAL (66 aa)) folds into the S4 RNA-binding domain.

This sequence belongs to the universal ribosomal protein uS4 family. Part of the 30S ribosomal subunit. Contacts protein S5. The interaction surface between S4 and S5 is involved in control of translational fidelity.

One of the primary rRNA binding proteins, it binds directly to 16S rRNA where it nucleates assembly of the body of the 30S subunit. In terms of biological role, with S5 and S12 plays an important role in translational accuracy. This chain is Small ribosomal subunit protein uS4, found in Legionella pneumophila (strain Corby).